The chain runs to 458 residues: Homogentisate 1,2-dioxygenase (458 aa).

The Proton acceptor role is filled by H308. Fe cation-binding residues include H351 and E357. Y366 and H387 together coordinate homogentisate. H387 contributes to the Fe cation binding site.

The protein belongs to the homogentisate dioxygenase family. In terms of assembly, hexamer; dimer of trimers. Fe cation is required as a cofactor.

It catalyses the reaction homogentisate + O2 = 4-maleylacetoacetate + H(+). The protein operates within amino-acid degradation; L-phenylalanine degradation; acetoacetate and fumarate from L-phenylalanine: step 4/6. Its function is as follows. Involved in the catabolism of homogentisate (2,5-dihydroxyphenylacetate or 2,5-OH-PhAc), a central intermediate in the degradation of phenylalanine and tyrosine. Catalyzes the oxidative ring cleavage of the aromatic ring of homogentisate to yield maleylacetoacetate. In Xanthomonas axonopodis pv. citri (strain 306), this protein is Homogentisate 1,2-dioxygenase.